A 77-amino-acid chain; its full sequence is NAD(P)H-quinone oxidoreductase subunit L (77 aa).

The next 2 helical transmembrane spans lie at 12–32 and 47–67; these read FVAY…ILFY and LGVY…SPFL.

Belongs to the complex I NdhL subunit family. NDH-1 can be composed of about 15 different subunits; different subcomplexes with different compositions have been identified which probably have different functions.

The protein resides in the cellular thylakoid membrane. It carries out the reaction a plastoquinone + NADH + (n+1) H(+)(in) = a plastoquinol + NAD(+) + n H(+)(out). The enzyme catalyses a plastoquinone + NADPH + (n+1) H(+)(in) = a plastoquinol + NADP(+) + n H(+)(out). Its function is as follows. NDH-1 shuttles electrons from an unknown electron donor, via FMN and iron-sulfur (Fe-S) centers, to quinones in the respiratory and/or the photosynthetic chain. The immediate electron acceptor for the enzyme in this species is believed to be plastoquinone. Couples the redox reaction to proton translocation, and thus conserves the redox energy in a proton gradient. Cyanobacterial NDH-1 also plays a role in inorganic carbon-concentration. The polypeptide is NAD(P)H-quinone oxidoreductase subunit L (Prochlorococcus marinus (strain MIT 9515)).